A 780-amino-acid chain; its full sequence is MLHSVNSNNNNNIIKLNIGGFKYITTRETLILNSSFFNGLLNSDCGTVIDSKGYYFIDRDGELFSPILSFMRTGTFTLPYRMSLNNVYREVDFYGVDRLSALIQHKINISNITSVAGGIYFISKLPLTSNNNNIIINNSNNNNRKILHAVIKANIMALYFNDGYLEIWMQGMSFQWVKILTHLCFSNEYHIKELTARILKNDLNETTSFSLAARTSTERKVLIWFIDLDYHHMKVKIKERDITINHDIDYFHFLISNSFLACISMYGLITIVDLADQINLVSNNNQINQNNQINQNNQNNQNNQNNQNNNFKVIILEDRVSGIANSNESSLFIACSNSKVYELKQNIKRNWEWSIDEIYKLYDPEFFHNTFGFSLTNNNNNITNNNTNINNNNNPNSIYGNENNNNNNNQQNIINEIINKRRIRNNNNCSPLVTCLNSSIITNGGRLKSVLVLGTDDGVVHFLYKSVRDNMDRFYFASTYTLCNEGDDPISKVLISGGEEGVFINAISTSGISKSWHFIFNKQQQRVTGNSVYTGSSTKCIGCISLSSISNSNNLFNNNDNNDDNSFSINDIINNNNNYFNIFKFKNQKDLHFTSNSNNQKENNQYNLDGNFKFSSYNQIKVVIDQSNNLLVFAGSHRNAICALDYELPSTPILIIPLMDKTKVQRILISTFGGCEPTIHDQSFQLLTFHQSNQIYSWSLKEINHYFISTTETILNNDNFLNNINNINNNNNNNNINNNNNTIVKKRSGSSPLISALNNSILNSNNNNNNDNNPINNYDH.

Residues 10–80 (NNNIIKLNIG…MRTGTFTLPY (71 aa)) form the BTB domain.

This is an uncharacterized protein from Dictyostelium discoideum (Social amoeba).